Reading from the N-terminus, the 288-residue chain is Solute carrier family 25 member 47-B (288 aa).

3 Solcar repeats span residues 1–83 (MHLA…ILQF), 99–191 (AHIF…ICEI), and 199–286 (PGWP…VVRL). A run of 6 helical transmembrane segments spans residues 3–23 (LADFLAGSVGGAFGVAVGYPL), 58–75 (GMSMPISTVSISSSLVFG), 101–121 (IFLAGFTGGVTQVLVMAPADI), 175–195 (GPSFATYFLTYNTICEILTTE), 199–219 (PGWPVVLLAGGVSGMCGWAVG), and 257–277 (VLFRGLTVNCIRAFPVNMSVF).

This sequence belongs to the mitochondrial carrier (TC 2.A.29) family.

Its subcellular location is the mitochondrion inner membrane. This Danio rerio (Zebrafish) protein is Solute carrier family 25 member 47-B (slc25a47b).